We begin with the raw amino-acid sequence, 493 residues long: Probable cytosol aminopeptidase (493 aa).

Positions 262 and 267 each coordinate Mn(2+). The active site involves Lys-274. Residues Asp-285, Asp-344, and Glu-346 each coordinate Mn(2+). The active site involves Arg-348.

Belongs to the peptidase M17 family. Mn(2+) serves as cofactor.

The protein resides in the cytoplasm. The enzyme catalyses Release of an N-terminal amino acid, Xaa-|-Yaa-, in which Xaa is preferably Leu, but may be other amino acids including Pro although not Arg or Lys, and Yaa may be Pro. Amino acid amides and methyl esters are also readily hydrolyzed, but rates on arylamides are exceedingly low.. The catalysed reaction is Release of an N-terminal amino acid, preferentially leucine, but not glutamic or aspartic acids.. Functionally, presumably involved in the processing and regular turnover of intracellular proteins. Catalyzes the removal of unsubstituted N-terminal amino acids from various peptides. The protein is Probable cytosol aminopeptidase of Xanthomonas campestris pv. campestris (strain 8004).